Here is an 861-residue protein sequence, read N- to C-terminus: Glucans biosynthesis glucosyltransferase H (861 aa).

Helical transmembrane passes span 142–162 (FILLLLMLAQTSVATYYMKGI), 188–208 (VLPYVIQFGILALFAILFCWV), 516–536 (VFLTGVMSYLSAPLWFFFLVL), 573–593 (LFSTTLTLLFLPKLLSVMLIW), 600–620 (FGGVIRVTLSMLLEMFFSVLL), and 683–703 (FLWWLSPIVGSLILSIPVSVI).

It belongs to the glycosyltransferase 2 family. OpgH subfamily.

The protein resides in the cell inner membrane. The protein operates within glycan metabolism; osmoregulated periplasmic glucan (OPG) biosynthesis. Involved in the biosynthesis of osmoregulated periplasmic glucans (OPGs). The polypeptide is Glucans biosynthesis glucosyltransferase H (Pseudomonas aeruginosa (strain UCBPP-PA14)).